The chain runs to 346 residues: Putative agmatine deiminase (346 aa).

The active-site Amidino-cysteine intermediate is C333.

This sequence belongs to the agmatine deiminase family.

It carries out the reaction agmatine + H2O = N-carbamoylputrescine + NH4(+). This chain is Putative agmatine deiminase, found in Legionella pneumophila (strain Paris).